The sequence spans 248 residues: UPF0651 protein YPL107W, mitochondrial (248 aa).

The N-terminal 26 residues, 1–26 (MIRNQGWSLLYRIYPVRRFTRYSRVD), are a transit peptide targeting the mitochondrion. The Oxidoreductase-like domain occupies 69 to 116 (KKIAGVQVPAKPQEPDNCCMSGCVNCVWEIYSEDLRDWKHRRKEAAEK).

The protein belongs to the UPF0651 family.

Its subcellular location is the mitochondrion. The sequence is that of UPF0651 protein YPL107W, mitochondrial from Saccharomyces cerevisiae (strain ATCC 204508 / S288c) (Baker's yeast).